A 538-amino-acid polypeptide reads, in one-letter code: Sodium/hydrogen exchanger 1 (538 aa).

At 1 to 19 (MLDSLVSKLPSLSTSDHAS) the chain is on the cytoplasmic side. Residues 20–40 (VVALNLFVALLCACIVLGHLL) form a helical membrane-spanning segment. Topologically, residues 41-45 (EENRW) are vacuolar. Residues 46–66 (MNESITALLIGLGTGVTILLI) form a helical membrane-spanning segment. Residues 67 to 73 (SKGKSSH) lie on the Cytoplasmic side of the membrane. An intramembrane region (helical) is located at residues 74–94 (LLVFSEDLFFIYLLPPIIFNA). At 95-106 (GFQVKKKQFFRN) the chain is on the cytoplasmic side. The helical transmembrane segment at 107-127 (FVTIMLFGAVGTIISCTIISL) threads the bilayer. Residues 128-146 (GVTQFFKKLDIGTFDLGDY) are Vacuolar-facing. Intramembrane regions (helical) lie at residues 147-166 (LAIG…QVLN) and 172-192 (LLYS…VVVF). Residues 193–216 (NAIQSFDLTHLNHEAAFHLLGNFL) are Vacuolar-facing. The chain crosses the membrane as a helical span at residues 217 to 237 (YLFLLSTLLGAATGLISAYVI). At 238–262 (KKLYFGRHSTDREVALMMLMAYLSY) the chain is on the cytoplasmic side. The helical transmembrane segment at 263-283 (MLAELFDLSGILTVFFCGIVM) threads the bilayer. The Vacuolar portion of the chain corresponds to 284–302 (SHYTWHNVTESSRITTKHT). The N-linked (GlcNAc...) asparagine glycan is linked to N290. Residues 303–323 (FATLSFLAETFIFLYVGMDAL) form a helical membrane-spanning segment. The Cytoplasmic portion of the chain corresponds to 324 to 342 (DIDKWRSVSDTPGTSIAVS). A helical transmembrane segment spans residues 343-363 (SILMGLVMVGRAAFVFPLSFL). Topologically, residues 364–378 (SNLAKKNQSEKINFN) are vacuolar. N370 carries an N-linked (GlcNAc...) asparagine glycan. The helical transmembrane segment at 379–399 (MQVVIWWSGLMRGAVSMALAY) threads the bilayer. The Cytoplasmic segment spans residues 400-413 (NKFTRAGHTDVRGN). The chain crosses the membrane as a helical span at residues 414–434 (AIMITSTITVCLFSTVVFGML). The Vacuolar segment spans residues 435–538 (TKPLISYLLP…ERNPPDLSKA (104 aa)). N447 carries an N-linked (GlcNAc...) asparagine glycan. The segment at 496-518 (RTVHYYWRQFDDSFMRPVFGGRG) is interaction with CML18/CAM15.

Belongs to the monovalent cation:proton antiporter 1 (CPA1) transporter (TC 2.A.36) family. In terms of assembly, calcium and pH-dependent interaction with CML18/CAM15 (increases when pH decreases, better at pH 5.5 than at pH 7.5). As to expression, ubiquitous, with higher levels around vascular tissues and guard cells.

It localises to the vacuole membrane. The protein localises to the endoplasmic reticulum membrane. Its subcellular location is the golgi apparatus membrane. The enzyme catalyses Na(+)(in) + H(+)(out) = Na(+)(out) + H(+)(in). It catalyses the reaction K(+)(in) + H(+)(out) = K(+)(out) + H(+)(in). Its function is as follows. Acts in low affinity electroneutral exchange of protons for cations such as Na(+) or K(+) across membranes. Can also exchange Li(+) and Cs(+) with a lower affinity. Involved in vacuolar ion compartmentalization necessary for cell volume regulation and cytoplasmic Na(+) detoxification. Required during leaves expansion, probably to stimulate epidermal cell expansion. Confers competence to grow in high salinity conditions. The polypeptide is Sodium/hydrogen exchanger 1 (NHX1) (Arabidopsis thaliana (Mouse-ear cress)).